The sequence spans 320 residues: Malate dehydrogenase (320 aa).

Residues 10-15 (GAGQIG) and D34 contribute to the NAD(+) site. Substrate is bound by residues R83 and R89. NAD(+) contacts are provided by residues N96 and 119-121 (ITN). Positions 121 and 152 each coordinate substrate. Catalysis depends on H176, which acts as the Proton acceptor.

The protein belongs to the LDH/MDH superfamily. MDH type 3 family.

It carries out the reaction (S)-malate + NAD(+) = oxaloacetate + NADH + H(+). Catalyzes the reversible oxidation of malate to oxaloacetate. This Beijerinckia indica subsp. indica (strain ATCC 9039 / DSM 1715 / NCIMB 8712) protein is Malate dehydrogenase.